The primary structure comprises 120 residues: MRNVYDIAYELANALKESNEFKRFKAAKEKIEKDEKLKQMVMDFKKKQLELEQKRLQGQEVTSSDVYSLQQLYQIISLNPDIEEYLSSEMMLAKILADISKIIAEAVDLKDEMFGLLESK.

This sequence belongs to the UPF0342 family.

This Caldicellulosiruptor saccharolyticus (strain ATCC 43494 / DSM 8903 / Tp8T 6331) protein is UPF0342 protein Csac_0863.